A 147-amino-acid polypeptide reads, in one-letter code: 3-dehydroquinate dehydratase (147 aa).

Tyr23 (proton acceptor) is an active-site residue. The substrate site is built by Asn74, His80, and Asp87. The Proton donor role is filled by His100. Residues 101–102 (LS) and Arg111 each bind substrate.

This sequence belongs to the type-II 3-dehydroquinase family. As to quaternary structure, homododecamer.

The catalysed reaction is 3-dehydroquinate = 3-dehydroshikimate + H2O. The protein operates within metabolic intermediate biosynthesis; chorismate biosynthesis; chorismate from D-erythrose 4-phosphate and phosphoenolpyruvate: step 3/7. Functionally, catalyzes a trans-dehydration via an enolate intermediate. In Clostridium botulinum (strain Loch Maree / Type A3), this protein is 3-dehydroquinate dehydratase.